Here is a 285-residue protein sequence, read N- to C-terminus: Probable endonuclease 4 (285 aa).

Zn(2+) contacts are provided by His-69, His-109, Glu-145, Asp-179, His-182, His-216, Asp-229, His-231, and Glu-261.

It belongs to the AP endonuclease 2 family. Zn(2+) is required as a cofactor.

The catalysed reaction is Endonucleolytic cleavage to 5'-phosphooligonucleotide end-products.. Functionally, endonuclease IV plays a role in DNA repair. It cleaves phosphodiester bonds at apurinic or apyrimidinic (AP) sites, generating a 3'-hydroxyl group and a 5'-terminal sugar phosphate. The polypeptide is Probable endonuclease 4 (Salmonella paratyphi C (strain RKS4594)).